A 309-amino-acid chain; its full sequence is Taste receptor type 2 member 8 (309 aa).

The Extracellular portion of the chain corresponds to 1 to 7; that stretch reads MFSPADN. A helical transmembrane segment spans residues 8 to 28; the sequence is IFIILITGEFILGILGNGYIA. Topologically, residues 29–50 are cytoplasmic; sequence LVNWIDWIKKKKISTIDYILTN. Residues 51–71 form a helical membrane-spanning segment; it reads LVISRICLISVMVVNGIVIAV. Over 72–82 the chain is Extracellular; sequence YPDVYTKSKLQ. A helical transmembrane segment spans residues 83–103; that stretch reads IAICTFWTFANYLNMWITTCL. Residues 104-131 lie on the Cytoplasmic side of the membrane; that stretch reads NVFYFLKIANSSHPLFLWLKQKIDMVVR. The chain crosses the membrane as a helical span at residues 132–152; it reads WILLGCFAISLLVSLIAAIVL. Over 153 to 184 the chain is Extracellular; that stretch reads SYDYRFHAIAKHKRNITEMFHVSKRPYFEPLT. N167 is a glycosylation site (N-linked (GlcNAc...) asparagine). Residues 185–205 form a helical membrane-spanning segment; sequence LFNLFAIVPFIVSLISFFLLV. The Cytoplasmic segment spans residues 206 to 239; sequence RSLWRHTKQIKLYATGGRDPSTEVHVRAIKTMTS. A helical membrane pass occupies residues 240–260; that stretch reads FIFLFFLYYISSILVTFSYLM. The Extracellular portion of the chain corresponds to 261-266; that stretch reads TKYKLA. Residues 267–287 form a helical membrane-spanning segment; that stretch reads VEFGEIVAILYPLGHSLILIV. The Cytoplasmic portion of the chain corresponds to 288–309; it reads LNNKLRQTFVRMLTCRKIACVI.

Belongs to the G-protein coupled receptor T2R family.

The protein localises to the membrane. In terms of biological role, receptor that may play a role in the perception of bitterness and is gustducin-linked. May play a role in sensing the chemical composition of the gastrointestinal content. The activity of this receptor may stimulate alpha gustducin, mediate PLC-beta-2 activation and lead to the gating of TRPM5. In Gorilla gorilla gorilla (Western lowland gorilla), this protein is Taste receptor type 2 member 8 (TAS2R8).